Here is a 135-residue protein sequence, read N- to C-terminus: 6,7-dimethyl-8-ribityllumazine synthase (135 aa).

5-amino-6-(D-ribitylamino)uracil-binding positions include Phe12, 44 to 46 (AYD), and 68 to 70 (CVI). 73–74 (AT) contacts (2S)-2-hydroxy-3-oxobutyl phosphate. The active-site Proton donor is the His76. Leu101 is a 5-amino-6-(D-ribitylamino)uracil binding site. Arg116 contacts (2S)-2-hydroxy-3-oxobutyl phosphate.

Belongs to the DMRL synthase family.

It catalyses the reaction (2S)-2-hydroxy-3-oxobutyl phosphate + 5-amino-6-(D-ribitylamino)uracil = 6,7-dimethyl-8-(1-D-ribityl)lumazine + phosphate + 2 H2O + H(+). It participates in cofactor biosynthesis; riboflavin biosynthesis; riboflavin from 2-hydroxy-3-oxobutyl phosphate and 5-amino-6-(D-ribitylamino)uracil: step 1/2. In terms of biological role, catalyzes the formation of 6,7-dimethyl-8-ribityllumazine by condensation of 5-amino-6-(D-ribitylamino)uracil with 3,4-dihydroxy-2-butanone 4-phosphate. This is the penultimate step in the biosynthesis of riboflavin. This Methanoculleus marisnigri (strain ATCC 35101 / DSM 1498 / JR1) protein is 6,7-dimethyl-8-ribityllumazine synthase.